We begin with the raw amino-acid sequence, 372 residues long: MNFELLATDGKARRGRLTFPRGVVETPAFMPVGTYGTVKGMLPRDIEDIGAQIILGNTFHLWLRPGTEVIQRHGDLHDFMQWKGPILTDSGGFQVFSLGAMRKIKEEGVTFASPVDGAKVFMGPEESMAVQRALGSDIVMIFDECTPYPADHDVAKRSMELSLRWAKRSKIAHGDSPSALFGIVQGGMHEDLRLRSLDGLQEIGFDGLAIGGLSVGEPKEEMIRVLDFLPPQMPADKPRYLMGVGKPEDLVEGVRRGVDMFDCVMPTRNARNGHLFVDSGVIKIRNSVHKHDDSTLDPTCDCYTCKHFSRAYLHHLDKCGEMLGSMLNTIHNLRHYQRVMAGLREAIQQGTLAAFVDAFYAKRGLPTPPLDA.

Residue Asp89 is the Proton acceptor of the active site. Residues 89-93 (DSGGF), Asp143, Gln185, and Gly212 each bind substrate. Residues 243–249 (GVGKPED) form an RNA binding region. The active-site Nucleophile is Asp262. The interval 267 to 271 (TRNAR) is RNA binding; important for wobble base 34 recognition. 4 residues coordinate Zn(2+): Cys300, Cys302, Cys305, and His331.

Belongs to the queuine tRNA-ribosyltransferase family. As to quaternary structure, homodimer. Within each dimer, one monomer is responsible for RNA recognition and catalysis, while the other monomer binds to the replacement base PreQ1. It depends on Zn(2+) as a cofactor.

It carries out the reaction 7-aminomethyl-7-carbaguanine + guanosine(34) in tRNA = 7-aminomethyl-7-carbaguanosine(34) in tRNA + guanine. It participates in tRNA modification; tRNA-queuosine biosynthesis. Its function is as follows. Catalyzes the base-exchange of a guanine (G) residue with the queuine precursor 7-aminomethyl-7-deazaguanine (PreQ1) at position 34 (anticodon wobble position) in tRNAs with GU(N) anticodons (tRNA-Asp, -Asn, -His and -Tyr). Catalysis occurs through a double-displacement mechanism. The nucleophile active site attacks the C1' of nucleotide 34 to detach the guanine base from the RNA, forming a covalent enzyme-RNA intermediate. The proton acceptor active site deprotonates the incoming PreQ1, allowing a nucleophilic attack on the C1' of the ribose to form the product. After dissociation, two additional enzymatic reactions on the tRNA convert PreQ1 to queuine (Q), resulting in the hypermodified nucleoside queuosine (7-(((4,5-cis-dihydroxy-2-cyclopenten-1-yl)amino)methyl)-7-deazaguanosine). The sequence is that of Queuine tRNA-ribosyltransferase from Pseudomonas aeruginosa (strain LESB58).